Consider the following 7031-residue polypeptide: Extracellular matrix-binding protein EbhB (7031 aa).

The N-terminal stretch at 1 to 39 (MNYRDKIQKFSIRKYTVGTFSTVIATLVFLGFNTSQAHA) is a signal peptide. The span at 41–59 (ETNQPASVVKQKQQSNNEQ) shows a compositional bias: polar residues. 5 disordered regions span residues 41 to 86 (ETNQ…HENE), 99 to 152 (KVAQ…GNDN), 250 to 277 (PQRQ…PRSV), 1342 to 1373 (NNIT…ATTD), and 2418 to 2438 (TITP…TLTA). The span at 65–80 (SQVQNSQNSQNGQSLS) shows a compositional bias: low complexity. The segment covering 99 to 117 (KVAQSSTTNDEQPASQNVN) has biased composition (polar residues). A compositionally biased stretch (basic and acidic residues) spans 130–140 (PDKEQSKHKQN). 4 stretches are compositionally biased toward polar residues: residues 141 to 151 (ESQSANKNGND), 250 to 266 (PQRQ…QTRS), 1360 to 1373 (FRTT…ATTD), and 2427 to 2438 (HSVSSNPSTLTA). 38 FIVAR domains span residues 2524 to 2580 (AKNH…VSDA), 2610 to 2666 (SKNN…ISDE), 2687 to 2750 (DTHA…VQSA), 2780 to 2836 (AKTK…IAAE), 2864 to 2919 (AKTQ…IRQN), 2947 to 3002 (AKNQ…INTN), 3030 to 3085 (AKTQ…INDK), 3154 to 3212 (AMTK…VNQK), 3280 to 3339 (AMTG…VNNA), 3407 to 3465 (AMGN…VNRA), 3533 to 3591 (AMGN…VTEA), 3659 to 3717 (AMNT…ITQK), 3785 to 3843 (AMAS…VEAA), 3911 to 3969 (AMGN…VEQA), 4037 to 4095 (AMGT…VTAA), 4163 to 4221 (AMKG…ITQA), 4289 to 4347 (QMGN…VEAA), 4415 to 4473 (AMAN…VENA), 4541 to 4599 (AMGT…INQI), 4667 to 4725 (AMGQ…VDRA), 4793 to 4851 (AMNS…VDNA), 4919 to 4977 (AMGA…INGM), 5045 to 5103 (AMTA…VNSA), 5171 to 5229 (AMKG…ITQV), 5297 to 5355 (AMHS…VEQA), 5423 to 5481 (AMGQ…VERA), 5549 to 5607 (AMTA…VTNA), 5675 to 5733 (AMKG…INQA), 5801 to 5859 (AMTN…VETA), 5927 to 5985 (AMSN…VEQA), 6053 to 6111 (AMNQ…INQK), 6179 to 6236 (AMGN…VQAA), 6304 to 6362 (AMGQ…VEAA), 6430 to 6488 (AMQR…VEQA), 6556 to 6614 (AMDQ…VTAA), 6682 to 6740 (AMNQ…VTQA), 6818 to 6866 (DKDQ…VEAA), and 6934 to 6992 (AMGN…VEAA).

This chain is Extracellular matrix-binding protein EbhB (ebhB), found in Staphylococcus aureus (strain Newman).